The sequence spans 117 residues: Small ribosomal subunit protein bS6 (117 aa).

The interval 96–117 (HAEGPSVQMQKRDERDNRRERR) is disordered. A compositionally biased stretch (basic and acidic residues) spans 105-117 (QKRDERDNRRERR).

The protein belongs to the bacterial ribosomal protein bS6 family.

In terms of biological role, binds together with bS18 to 16S ribosomal RNA. In Ruegeria sp. (strain TM1040) (Silicibacter sp.), this protein is Small ribosomal subunit protein bS6.